Here is a 393-residue protein sequence, read N- to C-terminus: Enoyl-[acyl-carrier-protein] reductase [NADH] (393 aa).

NAD(+) is bound by residues 48 to 53, 74 to 75, 111 to 112, and 139 to 140; these read GSSTGY, FE, DA, and LA. Residue Tyr225 coordinates substrate. The active-site Proton donor is Tyr235. NAD(+) contacts are provided by residues Lys244 and 273 to 275; that span reads LVT.

The protein belongs to the TER reductase family. As to quaternary structure, monomer.

The enzyme catalyses a 2,3-saturated acyl-[ACP] + NAD(+) = a (2E)-enoyl-[ACP] + NADH + H(+). It participates in lipid metabolism; fatty acid biosynthesis. In terms of biological role, involved in the final reduction of the elongation cycle of fatty acid synthesis (FAS II). Catalyzes the reduction of a carbon-carbon double bond in an enoyl moiety that is covalently linked to an acyl carrier protein (ACP). This is Enoyl-[acyl-carrier-protein] reductase [NADH] from Pseudoalteromonas atlantica (strain T6c / ATCC BAA-1087).